Consider the following 310-residue polypeptide: Tyrosine recombinase XerC (310 aa).

In terms of domain architecture, Core-binding (CB) spans 11–97 (NSLQKPLSRF…SLRSFFDFLV (87 aa)). Positions 118 to 298 (PLPKNLDVDE…DFQHLAQAYD (181 aa)) constitute a Tyr recombinase domain. Catalysis depends on residues Arg-157, Lys-181, His-250, Arg-253, and His-276. Residue Tyr-285 is the O-(3'-phospho-DNA)-tyrosine intermediate of the active site.

Belongs to the 'phage' integrase family. XerC subfamily. As to quaternary structure, forms a cyclic heterotetrameric complex composed of two molecules of XerC and two molecules of XerD.

It localises to the cytoplasm. Site-specific tyrosine recombinase, which acts by catalyzing the cutting and rejoining of the recombining DNA molecules. The XerC-XerD complex is essential to convert dimers of the bacterial chromosome into monomers to permit their segregation at cell division. It also contributes to the segregational stability of plasmids. This Vibrio atlanticus (strain LGP32) (Vibrio splendidus (strain Mel32)) protein is Tyrosine recombinase XerC.